Here is a 400-residue protein sequence, read N- to C-terminus: Phosphoglycerate kinase (400 aa).

Substrate-binding positions include 23-25 (DLN), Arg38, 61-64 (HFGR), Arg120, and Arg153. Residues Lys203, Glu325, and 355-358 (GGDT) each bind ATP.

This sequence belongs to the phosphoglycerate kinase family. In terms of assembly, monomer.

The protein resides in the cytoplasm. It catalyses the reaction (2R)-3-phosphoglycerate + ATP = (2R)-3-phospho-glyceroyl phosphate + ADP. It functions in the pathway carbohydrate degradation; glycolysis; pyruvate from D-glyceraldehyde 3-phosphate: step 2/5. This Allorhizobium ampelinum (strain ATCC BAA-846 / DSM 112012 / S4) (Agrobacterium vitis (strain S4)) protein is Phosphoglycerate kinase.